The primary structure comprises 303 residues: Diaminopimelate epimerase (303 aa).

Positions 15, 47, and 67 each coordinate substrate. C76 serves as the catalytic Proton donor. Substrate contacts are provided by residues 77-78 (GN), N163, N197, and 215-216 (ER). The active-site Proton acceptor is the C224. Substrate is bound at residue 225–226 (GS).

This sequence belongs to the diaminopimelate epimerase family. Homodimer.

The protein resides in the cytoplasm. The catalysed reaction is (2S,6S)-2,6-diaminopimelate = meso-2,6-diaminopimelate. Its pathway is amino-acid biosynthesis; L-lysine biosynthesis via DAP pathway; DL-2,6-diaminopimelate from LL-2,6-diaminopimelate: step 1/1. In terms of biological role, catalyzes the stereoinversion of LL-2,6-diaminopimelate (L,L-DAP) to meso-diaminopimelate (meso-DAP), a precursor of L-lysine and an essential component of the bacterial peptidoglycan. The protein is Diaminopimelate epimerase of Allorhizobium ampelinum (strain ATCC BAA-846 / DSM 112012 / S4) (Agrobacterium vitis (strain S4)).